Consider the following 703-residue polypeptide: Ion-translocating oxidoreductase complex subunit C (703 aa).

4Fe-4S ferredoxin-type domains follow at residues 368-397 (MAPQEQEQSCIRCGLCVDACPAGLLPQQLY) and 407-436 (KARNHNLFDCIECGACAFVCPSNIPLVQYY). 8 residues coordinate [4Fe-4S] cluster: Cys377, Cys380, Cys383, Cys387, Cys416, Cys419, Cys422, and Cys426. Disordered regions lie at residues 505–558 (AVPA…EDPR) and 653–674 (AQQATAVETPAESPAVVTEEDP). Over residues 524-539 (AAREARKAQARERRAQ) the composition is skewed to basic and acidic residues.

This sequence belongs to the 4Fe4S bacterial-type ferredoxin family. RnfC subfamily. The complex is composed of six subunits: RnfA, RnfB, RnfC, RnfD, RnfE and RnfG. [4Fe-4S] cluster is required as a cofactor.

It localises to the cell inner membrane. Its function is as follows. Part of a membrane-bound complex that couples electron transfer with translocation of ions across the membrane. The chain is Ion-translocating oxidoreductase complex subunit C from Serratia proteamaculans (strain 568).